The sequence spans 33 residues: MDAPAIAAAKTAADALAAAKKTAADAAAAAAKP.

A Blocked amino end (Met) modification is found at methionine 1.

It belongs to the type-I AFP family.

In terms of biological role, antifreeze proteins lower the blood freezing point. The polypeptide is Ice-structuring protein GS-5 (Myoxocephalus aenaeus (Grubby sculpin)).